A 65-amino-acid polypeptide reads, in one-letter code: Large ribosomal subunit protein bL33m (65 aa).

Residues 1-8 constitute a mitochondrion transit peptide; the sequence is MFLSAVFF.

This sequence belongs to the bacterial ribosomal protein bL33 family. In terms of assembly, component of the mitochondrial large ribosomal subunit (mt-LSU). Mature mammalian 55S mitochondrial ribosomes consist of a small (28S) and a large (39S) subunit. The 28S small subunit contains a 12S ribosomal RNA (12S mt-rRNA) and 30 different proteins. The 39S large subunit contains a 16S rRNA (16S mt-rRNA), a copy of mitochondrial valine transfer RNA (mt-tRNA(Val)), which plays an integral structural role, and 52 different proteins.

The protein localises to the mitochondrion. The polypeptide is Large ribosomal subunit protein bL33m (MRPL33) (Homo sapiens (Human)).